A 156-amino-acid polypeptide reads, in one-letter code: Small ribosomal subunit protein uS7c (156 aa).

The protein belongs to the universal ribosomal protein uS7 family. As to quaternary structure, part of the 30S ribosomal subunit.

The protein localises to the plastid. The protein resides in the chloroplast. One of the primary rRNA binding proteins, it binds directly to 16S rRNA where it nucleates assembly of the head domain of the 30S subunit. The polypeptide is Small ribosomal subunit protein uS7c (rps7) (Thalassiosira pseudonana (Marine diatom)).